The chain runs to 421 residues: Protein HOMOLOG OF MAMMALIAN LYST-INTERACTING PROTEIN 5 (421 aa).

Ser2 carries the post-translational modification N-acetylserine. Residues 146-374 (IKEGRKPTPG…KYHYDSSYQP (229 aa)) form a disordered region. A compositionally biased stretch (polar residues) spans 165-185 (SIPSSGPSGSYDHSASDTNTT). Positions 188–207 (HRTELDPPHDSNDDSSHHQF) are enriched in basic and acidic residues. The span at 245–258 (LPPPTGPSDSPYPH) shows a compositional bias: pro residues. Residues 278–293 (NYSSHEPSPNSLPNFQ) show a composition bias toward polar residues. 2 stretches are compositionally biased toward low complexity: residues 294-308 (SYPS…STSP) and 317-337 (PEPY…SFSS).

It belongs to the VTA1 family. Homodimer. Interacts with SKD1/VPS4, VPS60-1, CHMP1A and CHMP1B. Binds to PROS/At4g24370. Interacts with MPK6 and MPK3. In terms of processing, phosphorylated by activated MPK6 and MPK3, this activation is required to trigger multivesicular bodies (MVBs) trafficking upon plant infection.

It localises to the cytoplasm. The protein resides in the endosome membrane. Its subcellular location is the nucleus. It is found in the endosome. The protein localises to the multivesicular body. Involved in the endosomal multivesicular bodies (MVB) pathway. MVBs contain intraluminal vesicles (ILVs) that are generated by invagination and scission from the limiting membrane of the endosome and are delivered to lysosomes enabling degradation of membrane proteins. Thought to be a cofactor of SKD1/VPS4, which catalyzes the disassembly of membrane-associated ESCRT-III. Target of pathogen-responsive mitogen-activated protein kinases (MPKs) that plays a critical role in plant basal resistance to Pseudomonas syringae in a SKD1-dependent manner by promoting multivesicular bodies (MVBs) trafficking upon plant infection. This chain is Protein HOMOLOG OF MAMMALIAN LYST-INTERACTING PROTEIN 5, found in Arabidopsis thaliana (Mouse-ear cress).